Reading from the N-terminus, the 206-residue chain is Large ribosomal subunit protein uL4 (206 aa).

The tract at residues Met63–Val93 is disordered. Basic residues predominate over residues Tyr64–Ala77.

Belongs to the universal ribosomal protein uL4 family. As to quaternary structure, part of the 50S ribosomal subunit.

Its function is as follows. One of the primary rRNA binding proteins, this protein initially binds near the 5'-end of the 23S rRNA. It is important during the early stages of 50S assembly. It makes multiple contacts with different domains of the 23S rRNA in the assembled 50S subunit and ribosome. Functionally, forms part of the polypeptide exit tunnel. The sequence is that of Large ribosomal subunit protein uL4 from Sinorhizobium fredii (strain NBRC 101917 / NGR234).